A 347-amino-acid chain; its full sequence is MSDAFKPLLAKLADGQTLDEDDAEQFFAACLRGEPTPAQVAAAVTAMRLRGETVGEITACARAMRRAAIHLDHPYEVIDVCGTGGDGLHTLNISTAVGFVAAGGGLKVAKHGNRAITSKSGTADVLAALGVNIDASLAQQRHALDTAGICFLFAQAHHGAMKHVSPIRQQLGFRTIFNLLGPLTNPAGAKRQVVGVSAHRFVEPVAKALGALGAERAWSVHGAGMDELTTTGETEVAEWRDGSLRLFTITPEAVGLPRAALADITGGDPAYNAAALTALLDGQKGAYRDIVMLNAAAAFLVADRVETLREGVELAGAVLDDGRAKAALAGLVAATNSETVPAQVTPA.

Residues Gly-82, Gly-85–Asp-86, Thr-90, Asn-92–Thr-95, Lys-110–Ser-118, and Thr-122 each bind 5-phospho-alpha-D-ribose 1-diphosphate. Gly-82 contributes to the anthranilate binding site. Ser-94 contacts Mg(2+). Asn-113 serves as a coordination point for anthranilate. Arg-168 contributes to the anthranilate binding site. Positions 226 and 227 each coordinate Mg(2+).

Belongs to the anthranilate phosphoribosyltransferase family. Homodimer. Mg(2+) serves as cofactor.

The enzyme catalyses N-(5-phospho-beta-D-ribosyl)anthranilate + diphosphate = 5-phospho-alpha-D-ribose 1-diphosphate + anthranilate. It participates in amino-acid biosynthesis; L-tryptophan biosynthesis; L-tryptophan from chorismate: step 2/5. Catalyzes the transfer of the phosphoribosyl group of 5-phosphorylribose-1-pyrophosphate (PRPP) to anthranilate to yield N-(5'-phosphoribosyl)-anthranilate (PRA). The sequence is that of Anthranilate phosphoribosyltransferase from Caulobacter sp. (strain K31).